The sequence spans 262 residues: Membrane protein US15 (262 aa).

7 helical membrane passes run 46–66 (GAVGWQLAGLTALLSAFCYAA), 77–97 (CLTESSPSLVFVIPVTSVIFI), 108–128 (IGVLLFYTLLHVPPLIVICLC), 133–153 (LVISAALFTLLAFLSCTGVAL), 163–183 (QIVVIHALITLTFTAIVVVIL), 186–206 (GWSWCFKIVLSFSVLITCLAV), and 226–246 (LLAAVKVFLSLVFTLLMVLRI).

Belongs to the HHV-5 US12 protein family.

The protein localises to the host membrane. The chain is Membrane protein US15 (US15) from Human cytomegalovirus (strain Merlin) (HHV-5).